A 268-amino-acid polypeptide reads, in one-letter code: MFSDAIRAVILGIVEGVTEFLPVSSTGHLLLAERFFDLGSGNFWNTFTVLIQLGAILAIVVIYFEKLWRIALGMFSNDADRRFVIGVLAAFLPAVVVGLIAGKYIKELLFNPWVVCFSLIVGGAVLMWVDQLDHKPHEHDATAFPLPMYIWIGIAQCLAMIPGVSRSGATIVSAMLLGADKRAAAEFSFFLAIPTMIGAFAYDFYKNRADMTTDHLGIVAIGFVVSFVTAIVVVKAFLSYVTRNGFTFFAWWRVIVGTLGLIALALGR.

A run of 7 helical transmembrane segments spans residues 43–63 (FWNTFTVLIQLGAILAIVVIY), 83–103 (FVIGVLAAFLPAVVVGLIAGK), 109–129 (LFNPWVVCFSLIVGGAVLMWV), 144–164 (FPLPMYIWIGIAQCLAMIPGV), 184–204 (AAEFSFFLAIPTMIGAFAYDF), 218–238 (IVAIGFVVSFVTAIVVVKAFL), and 246–266 (FTFFAWWRVIVGTLGLIALAL).

Belongs to the UppP family.

It localises to the cell inner membrane. It catalyses the reaction di-trans,octa-cis-undecaprenyl diphosphate + H2O = di-trans,octa-cis-undecaprenyl phosphate + phosphate + H(+). Its function is as follows. Catalyzes the dephosphorylation of undecaprenyl diphosphate (UPP). Confers resistance to bacitracin. The polypeptide is Undecaprenyl-diphosphatase (Nitrobacter hamburgensis (strain DSM 10229 / NCIMB 13809 / X14)).